The chain runs to 238 residues: Ribosomal RNA large subunit methyltransferase E (238 aa).

5 residues coordinate S-adenosyl-L-methionine: Gly76, Trp78, Asp99, Asp115, and Asp139. The active-site Proton acceptor is the Lys179.

It belongs to the class I-like SAM-binding methyltransferase superfamily. RNA methyltransferase RlmE family.

The protein localises to the cytoplasm. The catalysed reaction is uridine(2552) in 23S rRNA + S-adenosyl-L-methionine = 2'-O-methyluridine(2552) in 23S rRNA + S-adenosyl-L-homocysteine + H(+). Its function is as follows. Specifically methylates the uridine in position 2552 of 23S rRNA at the 2'-O position of the ribose in the fully assembled 50S ribosomal subunit. This Rhodopseudomonas palustris (strain BisB18) protein is Ribosomal RNA large subunit methyltransferase E.